An 86-amino-acid polypeptide reads, in one-letter code: Exodeoxyribonuclease 7 small subunit (86 aa).

Belongs to the XseB family. Heterooligomer composed of large and small subunits.

It is found in the cytoplasm. The enzyme catalyses Exonucleolytic cleavage in either 5'- to 3'- or 3'- to 5'-direction to yield nucleoside 5'-phosphates.. Functionally, bidirectionally degrades single-stranded DNA into large acid-insoluble oligonucleotides, which are then degraded further into small acid-soluble oligonucleotides. This Agrobacterium fabrum (strain C58 / ATCC 33970) (Agrobacterium tumefaciens (strain C58)) protein is Exodeoxyribonuclease 7 small subunit.